Consider the following 162-residue polypeptide: NADH-quinone oxidoreductase subunit I (162 aa).

4Fe-4S ferredoxin-type domains are found at residues 52 to 82 (LRRY…IEAG) and 93 to 122 (TRYD…EGPN). Positions 62, 65, 68, 72, 102, 105, 108, and 112 each coordinate [4Fe-4S] cluster.

It belongs to the complex I 23 kDa subunit family. As to quaternary structure, NDH-1 is composed of 14 different subunits. Subunits NuoA, H, J, K, L, M, N constitute the membrane sector of the complex. It depends on [4Fe-4S] cluster as a cofactor.

Its subcellular location is the cell inner membrane. It catalyses the reaction a quinone + NADH + 5 H(+)(in) = a quinol + NAD(+) + 4 H(+)(out). Its function is as follows. NDH-1 shuttles electrons from NADH, via FMN and iron-sulfur (Fe-S) centers, to quinones in the respiratory chain. The immediate electron acceptor for the enzyme in this species is believed to be ubiquinone. Couples the redox reaction to proton translocation (for every two electrons transferred, four hydrogen ions are translocated across the cytoplasmic membrane), and thus conserves the redox energy in a proton gradient. The chain is NADH-quinone oxidoreductase subunit I from Methylorubrum extorquens (strain PA1) (Methylobacterium extorquens).